A 673-amino-acid chain; its full sequence is UvrABC system protein B (673 aa).

One can recognise a Helicase ATP-binding domain in the interval 26 to 183; the sequence is ANFEAGLAKQ…RHLTDLQYTR (158 aa). 39-46 lines the ATP pocket; it reads GVTGSGKT. The Beta-hairpin signature appears at 92–115; that stretch reads YYDYYQPEAYVPSSDTFIEKDSSI. The region spanning 431–597 is the Helicase C-terminal domain; that stretch reads QVDDLMSEIH…SVERPISDIM (167 aa). The interval 601-631 is disordered; that stretch reads REDAAEKKSGKGRSKSRQVAEETPDYRAMKP. The segment covering 618–630 has biased composition (basic and acidic residues); the sequence is QVAEETPDYRAMK. A UVR domain is found at 635 to 670; that stretch reads AGKLKSLEQKMYQHAKDLEFEAAAQIRDQIQKLKTA.

The protein belongs to the UvrB family. As to quaternary structure, forms a heterotetramer with UvrA during the search for lesions. Interacts with UvrC in an incision complex.

It localises to the cytoplasm. The UvrABC repair system catalyzes the recognition and processing of DNA lesions. A damage recognition complex composed of 2 UvrA and 2 UvrB subunits scans DNA for abnormalities. Upon binding of the UvrA(2)B(2) complex to a putative damaged site, the DNA wraps around one UvrB monomer. DNA wrap is dependent on ATP binding by UvrB and probably causes local melting of the DNA helix, facilitating insertion of UvrB beta-hairpin between the DNA strands. Then UvrB probes one DNA strand for the presence of a lesion. If a lesion is found the UvrA subunits dissociate and the UvrB-DNA preincision complex is formed. This complex is subsequently bound by UvrC and the second UvrB is released. If no lesion is found, the DNA wraps around the other UvrB subunit that will check the other stand for damage. The polypeptide is UvrABC system protein B (Xanthomonas oryzae pv. oryzae (strain MAFF 311018)).